Consider the following 229-residue polypeptide: Adapter protein MecA (229 aa).

It belongs to the MecA family. Homodimer.

Functionally, enables the recognition and targeting of unfolded and aggregated proteins to the ClpC protease or to other proteins involved in proteolysis. This Latilactobacillus sakei subsp. sakei (strain 23K) (Lactobacillus sakei subsp. sakei) protein is Adapter protein MecA.